We begin with the raw amino-acid sequence, 114 residues long: MEMFGKIACFVVFCMVVVAPHAESLSCGEVTSGLAPCLPYLEGRGPLGGCCGGVKGLLGAAKTPEDRKTACTCLKSAANSIKGIDTGKAAGLPGVCGVNIPYKISPSTDCSTVQ.

Residues 1–23 (MEMFGKIACFVVFCMVVVAPHAE) form the signal peptide. Intrachain disulfides connect Cys27–Cys73, Cys37–Cys50, Cys51–Cys96, and Cys71–Cys110.

It belongs to the plant LTP family.

In terms of biological role, plant non-specific lipid-transfer proteins transfer phospholipids as well as galactolipids across membranes. May play a role in wax or cutin deposition in the cell walls of expanding epidermal cells and certain secretory tissues. The polypeptide is Non-specific lipid-transfer protein 2 (LE16) (Solanum lycopersicum (Tomato)).